Here is a 485-residue protein sequence, read N- to C-terminus: Glutamyl-tRNA(Gln) amidotransferase subunit A (485 aa).

Catalysis depends on charge relay system residues lysine 76 and serine 151. Serine 175 (acyl-ester intermediate) is an active-site residue.

Belongs to the amidase family. GatA subfamily. In terms of assembly, heterotrimer of A, B and C subunits.

The catalysed reaction is L-glutamyl-tRNA(Gln) + L-glutamine + ATP + H2O = L-glutaminyl-tRNA(Gln) + L-glutamate + ADP + phosphate + H(+). In terms of biological role, allows the formation of correctly charged Gln-tRNA(Gln) through the transamidation of misacylated Glu-tRNA(Gln) in organisms which lack glutaminyl-tRNA synthetase. The reaction takes place in the presence of glutamine and ATP through an activated gamma-phospho-Glu-tRNA(Gln). The protein is Glutamyl-tRNA(Gln) amidotransferase subunit A of Thiobacillus denitrificans (strain ATCC 25259 / T1).